The primary structure comprises 259 residues: MKILLTNDDGVTSQGLLILAKVLSQKHNILVVAPESEQSATGHAITVRMPIWVKRVRVLEEFPIYATTGTPADCVKIGMEVLANKQIDMVISGINIGHNLGTDVIYSGTVSGALEGALLGVPSIAVSAPARENFDYYSASFFISNFIENFDFSILEPFTALNINFPEGDIKGWKATRQSIRRYADRFEARTDPSGNTYYWMYGDVVEDDSATDCDYCVVSKGYVSVTPITVFMLNERALLQLKEVENGKENKTSWRSGS.

A divalent metal cation contacts are provided by Asp-8, Asp-9, Ser-39, and Asn-95.

This sequence belongs to the SurE nucleotidase family. Requires a divalent metal cation as cofactor.

It is found in the cytoplasm. The catalysed reaction is a ribonucleoside 5'-phosphate + H2O = a ribonucleoside + phosphate. Nucleotidase that shows phosphatase activity on nucleoside 5'-monophosphates. This chain is 5'-nucleotidase SurE, found in Pseudothermotoga lettingae (strain ATCC BAA-301 / DSM 14385 / NBRC 107922 / TMO) (Thermotoga lettingae).